The sequence spans 310 residues: Olfactory receptor 9A2 (310 aa).

Over 1–24 (MMDNHSSATEFHLLGFPGSQGLHH) the chain is Extracellular. Residue Asn-4 is glycosylated (N-linked (GlcNAc...) asparagine). A helical transmembrane segment spans residues 25–45 (ILFAIFFFFYLVTLMGNTVII). Residues 46–53 (VIVCVDKR) are Cytoplasmic-facing. The chain crosses the membrane as a helical span at residues 54 to 74 (LQSPMYFFLSHLSTLEILVTT). The Extracellular portion of the chain corresponds to 75-98 (IIVPMMLWGLLFLGCRQYLSLHVS). Over 117–135 (DRYVAVCNPLRYNIIMNSS) the chain is Cytoplasmic. Residues 136–156 (TCIWVVIVSWVFGFLSEIWPI) traverse the membrane as a helical segment. Topologically, residues 157–193 (YATFQFTFRKSNSLDHFYCDRGQLLKLSCDNTLLTEF) are extracellular. The helical transmembrane segment at 194–213 (ILFLMAVFILIGSLIPTIVS) threads the bilayer. Residues 214 to 233 (YTYIISTILKIPSASGRRKA) lie on the Cytoplasmic side of the membrane. Residues 234 to 254 (FSTFASHFTCVVIGYGSCLFL) form a helical membrane-spanning segment. At 255–267 (YVKPKQTQGVEYN) the chain is on the extracellular side. The chain crosses the membrane as a helical span at residues 268–288 (KIVSLLVSVLTPFLNPFIFTL). Residues 289 to 310 (RNDKVKEALRDGMKRCCQLLKD) are Cytoplasmic-facing.

This sequence belongs to the G-protein coupled receptor 1 family.

Its subcellular location is the cell membrane. Functionally, odorant receptor. This Homo sapiens (Human) protein is Olfactory receptor 9A2 (OR9A2).